The following is a 215-amino-acid chain: 3-isopropylmalate dehydratase small subunit (215 aa).

Belongs to the LeuD family. LeuD type 1 subfamily. Heterodimer of LeuC and LeuD.

It catalyses the reaction (2R,3S)-3-isopropylmalate = (2S)-2-isopropylmalate. The protein operates within amino-acid biosynthesis; L-leucine biosynthesis; L-leucine from 3-methyl-2-oxobutanoate: step 2/4. Its function is as follows. Catalyzes the isomerization between 2-isopropylmalate and 3-isopropylmalate, via the formation of 2-isopropylmaleate. In Xylella fastidiosa (strain 9a5c), this protein is 3-isopropylmalate dehydratase small subunit.